The sequence spans 62 residues: UPF0370 protein ESA_00777 (62 aa).

A helical transmembrane segment spans residues 4–24; it reads LGKYWWVLVLVFLLGVLLNVI. The segment covering 36–51 has biased composition (basic and acidic residues); sequence MDNRPELPPHRDFNDK. The interval 36–62 is disordered; the sequence is MDNRPELPPHRDFNDKWDDEDDWPKKK. Acidic residues predominate over residues 52–62; it reads WDDEDDWPKKK.

This sequence belongs to the UPF0370 family.

The protein resides in the cell membrane. In Cronobacter sakazakii (strain ATCC BAA-894) (Enterobacter sakazakii), this protein is UPF0370 protein ESA_00777.